The following is a 437-amino-acid chain: Zinc finger protein 491 (437 aa).

A C2H2-type 1; degenerate zinc finger spans residues 35–59 (KSCESGTCGEIFMGYSSFNRNIRTD). The C2H2-type 2; degenerate zinc-finger motif lies at 103–125 (FDCKECEKSFISPASIRRYMVTH). 11 consecutive C2H2-type zinc fingers follow at residues 131–153 (YKCK…ERTH), 159–181 (YECK…ERTH), 187–209 (YECK…ERTH), 215–237 (YKCK…ERTH), 243–265 (YECK…MRMH), 271–293 (HKCK…ERSH), 299–321 (YKCK…ERTH), 327–349 (DGCK…GRTH), 355–377 (YECK…ERTH), 383–405 (YECK…ERIH), and 411–433 (YQCK…ERTH).

Belongs to the krueppel C2H2-type zinc-finger protein family.

It localises to the nucleus. May be involved in transcriptional regulation. In Homo sapiens (Human), this protein is Zinc finger protein 491 (ZNF491).